The following is a 1074-amino-acid chain: DNA helicase B (1074 aa).

Disordered stretches follow at residues 1-38 (MARQDRLRELLGPLHPYKSDDEEEDCAQEEEGEQEEEF), 380-420 (GAKP…HVRS), and 932-1014 (GSCA…FDEE). Residues 20-38 (DDEEEDCAQEEEGEQEEEF) are compositionally biased toward acidic residues. Polar residues predominate over residues 934–946 (CAPSTGFASQPSS). Residues serine 942 and serine 946 each carry the phosphoserine modification. Threonine 992 carries the post-translational modification Phosphothreonine. 2 positions are modified to phosphoserine: serine 1015 and serine 1026. A Nuclear export signal motif is present at residues 1022–1046 (VEAPSPQVSSVFQNMRLNTLTPRQL). The interval 1040-1074 (TLTPRQLFKPTDNQDTGTAGVADDANDPSNQEMEM) is disordered.

This sequence belongs to the RecD family. HELB subfamily. Binds to RPA1; this interaction promotes HELB recruitment to chromatin following DNA damage. Interacts with at least two subunits of the DNA polymerase alpha complex. Interacts with CDC45. Interacts with TOPB1. Phosphorylated at Ser-942 by CDK2 during the G1/S transition, resulting in its nuclear export into the cytoplasm. As S phase progresses, its exclusion from the nucleus promotes the activation of long-range resection.

Its subcellular location is the nucleus. It is found in the cytoplasm. The protein localises to the chromosome. It carries out the reaction ATP + H2O = ADP + phosphate + H(+). Functionally, 5'-3' DNA helicase involved in DNA damage response by acting as an inhibitor of DNA end resection. Recruitment to single-stranded DNA (ssDNA) following DNA damage leads to inhibit the nucleases catalyzing resection, such as EXO1, BLM and DNA2, possibly via the 5'-3' ssDNA translocase activity of HELB. As cells approach S phase, DNA end resection is promoted by the nuclear export of HELB following phosphorylation. Acts independently of TP53BP1. Unwinds duplex DNA with 5'-3' polarity. Has single-strand DNA-dependent ATPase and DNA helicase activities. Prefers ATP and dATP as substrates. During S phase, may facilitate cellular recovery from replication stress. This is DNA helicase B from Mus musculus (Mouse).